The chain runs to 62 residues: Sperm protamine P1 (62 aa).

A disordered region spans residues 1 to 62; it reads MARYRHSRSR…RYSRRRRRRY (62 aa).

This sequence belongs to the protamine P1 family. Testis.

It localises to the nucleus. It is found in the chromosome. In terms of biological role, protamines substitute for histones in the chromatin of sperm during the haploid phase of spermatogenesis. They compact sperm DNA into a highly condensed, stable and inactive complex. The protein is Sperm protamine P1 (PRM1) of Notamacropus eugenii (Tammar wallaby).